Reading from the N-terminus, the 83-residue chain is Small ribosomal subunit protein uS17 (83 aa).

It belongs to the universal ribosomal protein uS17 family. As to quaternary structure, part of the 30S ribosomal subunit.

In terms of biological role, one of the primary rRNA binding proteins, it binds specifically to the 5'-end of 16S ribosomal RNA. The polypeptide is Small ribosomal subunit protein uS17 (Campylobacter curvus (strain 525.92)).